The following is a 579-amino-acid chain: Adipocyte plasma membrane-associated protein Hemomucin (579 aa).

The Cytoplasmic segment spans residues 1-6 (MGLLYA). A helical membrane pass occupies residues 7–29 (LRVRIMNFMIFFLLIILMPGLPP). Residues 30–579 (RTTFPFKDYI…INKQGVNVEL (550 aa)) are Extracellular-facing. Residues N213 and N217 are each glycosylated (N-linked (GlcNAc...) asparagine). Positions 427 to 579 (GLEASIGVPP…INKQGVNVEL (153 aa)) are disordered. Residues 435–529 (PPSKATPKPK…PKPTTTTTPT (95 aa)) are compositionally biased toward low complexity.

This sequence belongs to the strictosidine synthase family. Interacts with sturkopf. In terms of processing, O-glycosylated. Glycosylated in the ovary of 4 day old females. Post-translationally, phosphorylated. In terms of tissue distribution, detected in ovaries (at protein level). In larvae, detected in the fat body, salivary glands, imaginal disks and gut (at protein level). In adults, expressed in the cardia, and in regions of the ventriculus including the area posterior to the cardia. In females also expressed in follicle cells.

It is found in the cell membrane. In terms of biological role, transmembrane mucin that may be involved in cellular adhesion and the innate immune response. Membrane-tethered mucins are involved in many cell surface functions and form a physical barrier around cells to regulate cell-cell and/or cell-substrate interactions, and protect against pathogens or harmful extracellular conditions. This mucin likely acts in hemocyte adhesion as it is released from hemocytes during coagulation and is also able to bind lipophorin particles which form part of the hemocyte coagulogen. Able to induce expression of the antibacterial proteins in the presence of GalNAc-specific lectins and so probably also functions in the innate immune response. The sequence is that of Adipocyte plasma membrane-associated protein Hemomucin from Drosophila melanogaster (Fruit fly).